The chain runs to 254 residues: 3-oxo-5-alpha-steroid 4-dehydrogenase 2 (254 aa).

Helical transmembrane passes span 8 to 28, 72 to 92, 146 to 166, and 206 to 226; these read SPVL…LYVA, PLSL…VHYF, FCLG…SDYI, and LATW…FLGL.

The protein belongs to the steroid 5-alpha reductase family.

It localises to the microsome membrane. It is found in the endoplasmic reticulum membrane. It carries out the reaction a 3-oxo-5alpha-steroid + NADP(+) = a 3-oxo-Delta(4)-steroid + NADPH + H(+). The enzyme catalyses 17beta-hydroxy-5alpha-androstan-3-one + NADP(+) = testosterone + NADPH + H(+). It catalyses the reaction 5alpha-pregnane-3,20-dione + NADP(+) = progesterone + NADPH + H(+). Converts testosterone (T) into 5-alpha-dihydrotestosterone (DHT) and progesterone or corticosterone into their corresponding 5-alpha-3-oxosteroids. It plays a central role in sexual differentiation and androgen physiology. In Macaca fascicularis (Crab-eating macaque), this protein is 3-oxo-5-alpha-steroid 4-dehydrogenase 2 (SRD5A2).